The sequence spans 259 residues: Leucyl/phenylalanyl-tRNA--protein transferase (259 aa).

Belongs to the L/F-transferase family.

The protein localises to the cytoplasm. The enzyme catalyses N-terminal L-lysyl-[protein] + L-leucyl-tRNA(Leu) = N-terminal L-leucyl-L-lysyl-[protein] + tRNA(Leu) + H(+). It catalyses the reaction N-terminal L-arginyl-[protein] + L-leucyl-tRNA(Leu) = N-terminal L-leucyl-L-arginyl-[protein] + tRNA(Leu) + H(+). It carries out the reaction L-phenylalanyl-tRNA(Phe) + an N-terminal L-alpha-aminoacyl-[protein] = an N-terminal L-phenylalanyl-L-alpha-aminoacyl-[protein] + tRNA(Phe). Functionally, functions in the N-end rule pathway of protein degradation where it conjugates Leu, Phe and, less efficiently, Met from aminoacyl-tRNAs to the N-termini of proteins containing an N-terminal arginine or lysine. The sequence is that of Leucyl/phenylalanyl-tRNA--protein transferase from Teredinibacter turnerae (strain ATCC 39867 / T7901).